The chain runs to 273 residues: Large ribosomal subunit protein uL2cz/uL2cy (273 aa).

Positions 224–273 are disordered; that stretch reads NPVDHPHGGGEGRAPIGRKKPATPWGYPALGRRSRKRNKYSDRFILRRRK. A compositionally biased stretch (basic and acidic residues) spans 262–273; that stretch reads KYSDRFILRRRK.

It belongs to the universal ribosomal protein uL2 family. As to quaternary structure, part of the 50S ribosomal subunit.

The protein localises to the plastid. It is found in the chloroplast. This is Large ribosomal subunit protein uL2cz/uL2cy (rpl2-A) from Piper cenocladum (Ant piper).